Reading from the N-terminus, the 208-residue chain is Large ribosomal subunit protein bL17 (208 aa).

Residues 122–208 (TEKKKKKPAK…ASEEAPPKTE (87 aa)) form a disordered region. A compositionally biased stretch (low complexity) spans 151 to 179 (ADTPAPAAEESAPAKAAEPEAEAAAPEAE).

It belongs to the bacterial ribosomal protein bL17 family. Part of the 50S ribosomal subunit. Contacts protein L32.

In Desulfosudis oleivorans (strain DSM 6200 / JCM 39069 / Hxd3) (Desulfococcus oleovorans), this protein is Large ribosomal subunit protein bL17.